The primary structure comprises 309 residues: NAD kinase 2 (309 aa).

Asp-81 (proton acceptor) is an active-site residue. NAD(+) contacts are provided by residues 81–82, 155–156, Asp-185, 196–201, and Asn-255; these read DG, NE, and TAYALS.

This sequence belongs to the NAD kinase family. Requires a divalent metal cation as cofactor.

The protein resides in the cytoplasm. The catalysed reaction is NAD(+) + ATP = ADP + NADP(+) + H(+). Its function is as follows. Involved in the regulation of the intracellular balance of NAD and NADP, and is a key enzyme in the biosynthesis of NADP. Catalyzes specifically the phosphorylation on 2'-hydroxyl of the adenosine moiety of NAD to yield NADP. The sequence is that of NAD kinase 2 from Gloeobacter violaceus (strain ATCC 29082 / PCC 7421).